The following is a 145-amino-acid chain: Superoxide dismutase [Mn/Fe] (145 aa).

Residues H10 and H64 each contribute to the Fe(3+) site. H10 and H64 together coordinate Mn(2+).

Belongs to the iron/manganese superoxide dismutase family. Mn(2+) serves as cofactor. Requires Fe(3+) as cofactor.

The enzyme catalyses 2 superoxide + 2 H(+) = H2O2 + O2. Destroys superoxide anion radicals which are normally produced within the cells and which are toxic to biological systems. Catalyzes the dismutation of superoxide anion radicals into O2 and H2O2 by successive reduction and oxidation of the transition metal ion at the active site. The chain is Superoxide dismutase [Mn/Fe] (sodA) from Streptococcus acidominimus.